The following is a 260-amino-acid chain: Cytochrome c oxidase subunit 3 (260 aa).

6 helical membrane-spanning segments follow: residues 41–61 (LTLV…RDII), 81–101 (GMIL…WAFF), 133–153 (TGVL…ILAG), 161–181 (ALFL…WEYI), 196–216 (FFVA…FLMV), and 238–258 (AWYW…IYWW).

This sequence belongs to the cytochrome c oxidase subunit 3 family. As to quaternary structure, component of the cytochrome c oxidase (complex IV, CIV), a multisubunit enzyme composed of a catalytic core of 3 subunits and several supernumerary subunits. The complex exists as a monomer or a dimer and forms supercomplexes (SCs) in the inner mitochondrial membrane with ubiquinol-cytochrome c oxidoreductase (cytochrome b-c1 complex, complex III, CIII).

The protein localises to the mitochondrion inner membrane. It catalyses the reaction 4 Fe(II)-[cytochrome c] + O2 + 8 H(+)(in) = 4 Fe(III)-[cytochrome c] + 2 H2O + 4 H(+)(out). In terms of biological role, component of the cytochrome c oxidase, the last enzyme in the mitochondrial electron transport chain which drives oxidative phosphorylation. The respiratory chain contains 3 multisubunit complexes succinate dehydrogenase (complex II, CII), ubiquinol-cytochrome c oxidoreductase (cytochrome b-c1 complex, complex III, CIII) and cytochrome c oxidase (complex IV, CIV), that cooperate to transfer electrons derived from NADH and succinate to molecular oxygen, creating an electrochemical gradient over the inner membrane that drives transmembrane transport and the ATP synthase. Cytochrome c oxidase is the component of the respiratory chain that catalyzes the reduction of oxygen to water. Electrons originating from reduced cytochrome c in the intermembrane space (IMS) are transferred via the dinuclear copper A center (CU(A)) of subunit 2 and heme A of subunit 1 to the active site in subunit 1, a binuclear center (BNC) formed by heme A3 and copper B (CU(B)). The BNC reduces molecular oxygen to 2 water molecules using 4 electrons from cytochrome c in the IMS and 4 protons from the mitochondrial matrix. This Strongylocentrotus purpuratus (Purple sea urchin) protein is Cytochrome c oxidase subunit 3 (COIII).